A 451-amino-acid chain; its full sequence is Probable glycine dehydrogenase (decarboxylating) subunit 1 (451 aa).

It belongs to the GcvP family. N-terminal subunit subfamily. The glycine cleavage system is composed of four proteins: P, T, L and H. In this organism, the P 'protein' is a heterodimer of two subunits.

It carries out the reaction N(6)-[(R)-lipoyl]-L-lysyl-[glycine-cleavage complex H protein] + glycine + H(+) = N(6)-[(R)-S(8)-aminomethyldihydrolipoyl]-L-lysyl-[glycine-cleavage complex H protein] + CO2. The glycine cleavage system catalyzes the degradation of glycine. The P protein binds the alpha-amino group of glycine through its pyridoxal phosphate cofactor; CO(2) is released and the remaining methylamine moiety is then transferred to the lipoamide cofactor of the H protein. The protein is Probable glycine dehydrogenase (decarboxylating) subunit 1 of Thermococcus kodakarensis (strain ATCC BAA-918 / JCM 12380 / KOD1) (Pyrococcus kodakaraensis (strain KOD1)).